The primary structure comprises 85 residues: Protein AC4 (85 aa).

Glycine 2 carries N-myristoyl glycine; by host lipidation. The tract at residues 44-63 (RAPMSNPTSRKTGTVSNGDC) is disordered. Over residues 46 to 62 (PMSNPTSRKTGTVSNGD) the composition is skewed to polar residues.

It belongs to the geminiviridae protein AC4/C4 family.

It localises to the host cell membrane. In terms of biological role, pathogenicity determinant. May act as a suppressor of RNA-mediated gene silencing, also known as post-transcriptional gene silencing (PTGS), a mechanism of plant viral defense that limits the accumulation of viral RNAs. The protein is Protein AC4 of Potato yellow mosaic virus (isolate Venezuela) (PYMV).